The chain runs to 494 residues: Glucose-6-phosphate 1-dehydrogenase (494 aa).

NADP(+) is bound by residues R46 and K150. H180, K184, E218, and D237 together coordinate substrate. The active-site Proton acceptor is the H242. A substrate-binding site is contributed by K342.

The protein belongs to the glucose-6-phosphate dehydrogenase family.

It catalyses the reaction D-glucose 6-phosphate + NADP(+) = 6-phospho-D-glucono-1,5-lactone + NADPH + H(+). It functions in the pathway carbohydrate degradation; pentose phosphate pathway; D-ribulose 5-phosphate from D-glucose 6-phosphate (oxidative stage): step 1/3. Catalyzes the oxidation of glucose 6-phosphate to 6-phosphogluconolactone. This Aggregatibacter actinomycetemcomitans (Actinobacillus actinomycetemcomitans) protein is Glucose-6-phosphate 1-dehydrogenase.